The following is a 1482-amino-acid chain: Pregnancy zone protein (1482 aa).

An N-terminal signal peptide occupies residues 1 to 25 (MRKDRLLHLCLVLLLILLSASDSNS). 5 N-linked (GlcNAc...) asparagine glycosylation sites follow: Asn54, Asn69, Asn246, Asn392, and Asn406. Residues 685–735 (CSVIPSVSAGAVGQGYYGAGLGVVERPYVPQLGTYNVIPLNNEQSSGPVPE) are bait region. 3 N-linked (GlcNAc...) asparagine glycosylation sites follow: Asn753, Asn875, and Asn932. The isoglutamyl cysteine thioester (Cys-Gln) cross-link spans 978–981 (CGEQ). 2 N-linked (GlcNAc...) asparagine glycosylation sites follow: Asn997 and Asn1430.

It belongs to the protease inhibitor I39 (alpha-2-macroglobulin) family. As to quaternary structure, homotetramer, which consists of two pairs of disulfide-linked chains. Plasma. Prominent constituent of late-pregnancy sera.

The protein localises to the secreted. Functionally, is able to inhibit all four classes of proteinases by a unique 'trapping' mechanism. This protein has a peptide stretch, called the 'bait region' which contains specific cleavage sites for different proteinases. When a proteinase cleaves the bait region, a conformational change is induced in the protein which traps the proteinase. The entrapped enzyme remains active against low molecular weight substrates (activity against high molecular weight substrates is greatly reduced). Following cleavage in the bait region a thioester bond is hydrolyzed and mediates the covalent binding of the protein to the proteinase. This Homo sapiens (Human) protein is Pregnancy zone protein (PZP).